Consider the following 302-residue polypeptide: Protein FdhE homolog (302 aa).

It belongs to the FdhE family.

It is found in the cytoplasm. In terms of biological role, necessary for formate dehydrogenase activity. In Haemophilus influenzae (strain PittGG), this protein is Protein FdhE homolog.